Reading from the N-terminus, the 309-residue chain is Protein FdhE (309 aa).

It belongs to the FdhE family.

It localises to the cytoplasm. Its function is as follows. Necessary for formate dehydrogenase activity. The sequence is that of Protein FdhE from Salmonella arizonae (strain ATCC BAA-731 / CDC346-86 / RSK2980).